The primary structure comprises 279 residues: Expansin-A22 (279 aa).

An N-terminal signal peptide occupies residues 1–27 (MKLLEKMIYVEFLMIIMVIWVVPMSYG). One can recognise an Expansin-like EG45 domain in the interval 76-186 (QGACGYGNLF…RRIPCSKTGG (111 aa)). In terms of domain architecture, Expansin-like CBD spans 196–275 (YFLMVLIYNV…NWGFGQTFDG (80 aa)).

Belongs to the expansin family. Expansin A subfamily.

The protein resides in the secreted. It is found in the cell wall. The protein localises to the membrane. Causes loosening and extension of plant cell walls by disrupting non-covalent bonding between cellulose microfibrils and matrix glucans. No enzymatic activity has been found. The sequence is that of Expansin-A22 (EXPA22) from Arabidopsis thaliana (Mouse-ear cress).